We begin with the raw amino-acid sequence, 640 residues long: Pro-neuregulin-1, membrane-bound isoform (640 aa).

Positions 1-19 (MSERKEGRGKGKGKKKERG) are excised as a propeptide. Residues 1-53 (MSERKEGRGKGKGKKKERGSGKKPESAAGSQSPALPPRLKEMKSQESAAGSKL) are disordered. Over 20-242 (SGKKPESAAG…EKAEELYQKR (223 aa)) the chain is Extracellular. The Ig-like C2-type domain occupies 37-128 (PRLKEMKSQE…GNDSASANIT (92 aa)). Cys-57 and Cys-112 are joined by a disulfide. 3 N-linked (GlcNAc...) asparagine glycosylation sites follow: Asn-120, Asn-126, and Asn-164. Residues 178–222 (HLVKCAEKEKTFCVNGGECFMVKDLSNPSRYLCKCQPGFTGARCT) enclose the EGF-like domain. 3 disulfides stabilise this stretch: Cys-182–Cys-196, Cys-190–Cys-210, and Cys-212–Cys-221. The helical transmembrane segment at 243-265 (VLTITGICIALLVVGIMCVVAYC) threads the bilayer. Residues 266–640 (KTKKQRKKLH…VIANQDPIAV (375 aa)) lie on the Cytoplasmic side of the membrane. A compositionally biased stretch (low complexity) spans 334 to 350 (TSHYTSTAHHSTTVTQT). Disordered stretches follow at residues 334–360 (TSHYTSTAHHSTTVTQTPSHSWSNGHT), 375–399 (SVENSRHSSPTGGPRGRLNGTGGPR), 433–461 (RMSPVDFHTPSSPKSPPSEMSPPVSSMTV), and 524–588 (EYET…DTPF). Residues 351 to 360 (PSHSWSNGHT) show a composition bias toward polar residues. Residues 387 to 397 (GPRGRLNGTGG) show a composition bias toward gly residues. Basic residues predominate over residues 542-552 (ANSRRAKRTKP). A compositionally biased stretch (low complexity) spans 563-574 (DSNTSSQSSNSE).

Belongs to the neuregulin family. In terms of assembly, the cytoplasmic domain interacts with the LIM domain region of LIMK1. Forms a ternary complex with ERBB3 and ITGAV:ITGB3 or ITGA6:ITGB4. Interacts with NRDC and BACE1. Proteolytic cleavage close to the plasma membrane on the external face leads to the release of the soluble growth factor form. Post-translationally, N- and O-glycosylated. Extensive glycosylation precedes the proteolytic cleavage. As to expression, type I isoforms are the predominant forms expressed in the endocardium. Isoform alpha is expressed in breast, ovary, testis, prostate, heart, skeletal muscle, lung, placenta liver, kidney, salivary gland, small intestine and brain, but not in uterus, stomach, pancreas, and spleen. Isoform 3 is the predominant form in mesenchymal cells and in non-neuronal organs, whereas isoform 6 is the major neuronal form. Isoform 8 is expressed in spinal cord and brain. Isoform 9 is the major form in skeletal muscle cells; in the nervous system it is expressed in spinal cord and brain. Also detected in adult heart, placenta, lung, liver, kidney, and pancreas. Isoform 10 is expressed in nervous system: spinal cord motor neurons, dorsal root ganglion neurons, and brain. Predominant isoform expressed in sensory and motor neurons. Not detected in adult heart, placenta, lung, liver, skeletal muscle, kidney, and pancreas. Not expressed in fetal lung, liver and kidney. Type IV isoforms are brain-specific.

It is found in the cell membrane. The protein localises to the secreted. Its subcellular location is the nucleus. The protein resides in the membrane. Functionally, direct ligand for ERBB3 and ERBB4 tyrosine kinase receptors. Concomitantly recruits ERBB1 and ERBB2 coreceptors, resulting in ligand-stimulated tyrosine phosphorylation and activation of the ERBB receptors. The multiple isoforms perform diverse functions such as inducing growth and differentiation of epithelial, glial, neuronal, and skeletal muscle cells; inducing expression of acetylcholine receptor in synaptic vesicles during the formation of the neuromuscular junction; stimulating lobuloalveolar budding and milk production in the mammary gland and inducing differentiation of mammary tumor cells; stimulating Schwann cell proliferation; implication in the development of the myocardium such as trabeculation of the developing heart. Isoform 10 may play a role in motor and sensory neuron development. Binds to ERBB4. Binds to ERBB3. Acts as a ligand for integrins and binds (via EGF domain) to integrins ITGAV:ITGB3 or ITGA6:ITGB4. Its binding to integrins and subsequent ternary complex formation with integrins and ERRB3 are essential for NRG1-ERBB signaling. Induces the phosphorylation and activation of MAPK3/ERK1, MAPK1/ERK2 and AKT1. Ligand-dependent ERBB4 endocytosis is essential for the NRG1-mediated activation of these kinases in neurons. This Homo sapiens (Human) protein is Pro-neuregulin-1, membrane-bound isoform (NRG1).